A 432-amino-acid chain; its full sequence is Adenylosuccinate synthetase (432 aa).

Residues 13 to 19 (GDEGKGK) and 41 to 43 (GHT) each bind GTP. The active-site Proton acceptor is D14. Positions 14 and 41 each coordinate Mg(2+). IMP is bound by residues 14–17 (DEGK), 39–42 (NAGH), T130, R144, Q225, T240, and R304. Catalysis depends on H42, which acts as the Proton donor. 300 to 306 (ATTGRRR) serves as a coordination point for substrate. GTP-binding positions include R306, 332–334 (KLD), and 415–417 (STG).

It belongs to the adenylosuccinate synthetase family. Homodimer. It depends on Mg(2+) as a cofactor.

The protein localises to the cytoplasm. It catalyses the reaction IMP + L-aspartate + GTP = N(6)-(1,2-dicarboxyethyl)-AMP + GDP + phosphate + 2 H(+). The protein operates within purine metabolism; AMP biosynthesis via de novo pathway; AMP from IMP: step 1/2. In terms of biological role, plays an important role in the de novo pathway of purine nucleotide biosynthesis. Catalyzes the first committed step in the biosynthesis of AMP from IMP. The polypeptide is Adenylosuccinate synthetase (Salmonella paratyphi A (strain AKU_12601)).